We begin with the raw amino-acid sequence, 430 residues long: tRNA-2-methylthio-N(6)-dimethylallyladenosine synthase (430 aa).

The MTTase N-terminal domain occupies 2-111 (KKIHIKTYGC…IPQAVERAIN (110 aa)). Residues C11, C47, C76, C147, C151, and C154 each contribute to the [4Fe-4S] cluster site. The Radical SAM core domain maps to 133–364 (RNSKHHAWIT…LNLQKEINKQ (232 aa)). Residues 367–428 (ENYLNKTVEI…AGPLYGDIIK (62 aa)) enclose the TRAM domain.

It belongs to the methylthiotransferase family. MiaB subfamily. In terms of assembly, monomer. Requires [4Fe-4S] cluster as cofactor.

It localises to the cytoplasm. The catalysed reaction is N(6)-dimethylallyladenosine(37) in tRNA + (sulfur carrier)-SH + AH2 + 2 S-adenosyl-L-methionine = 2-methylsulfanyl-N(6)-dimethylallyladenosine(37) in tRNA + (sulfur carrier)-H + 5'-deoxyadenosine + L-methionine + A + S-adenosyl-L-homocysteine + 2 H(+). Its function is as follows. Catalyzes the methylthiolation of N6-(dimethylallyl)adenosine (i(6)A), leading to the formation of 2-methylthio-N6-(dimethylallyl)adenosine (ms(2)i(6)A) at position 37 in tRNAs that read codons beginning with uridine. The protein is tRNA-2-methylthio-N(6)-dimethylallyladenosine synthase of Thermosipho melanesiensis (strain DSM 12029 / CIP 104789 / BI429).